A 236-amino-acid chain; its full sequence is 2,3,4,5-tetrahydropyridine-2,6-dicarboxylate N-acetyltransferase (236 aa).

It belongs to the transferase hexapeptide repeat family. DapH subfamily.

The enzyme catalyses (S)-2,3,4,5-tetrahydrodipicolinate + acetyl-CoA + H2O = L-2-acetamido-6-oxoheptanedioate + CoA. Its pathway is amino-acid biosynthesis; L-lysine biosynthesis via DAP pathway; LL-2,6-diaminopimelate from (S)-tetrahydrodipicolinate (acetylase route): step 1/3. In terms of biological role, catalyzes the transfer of an acetyl group from acetyl-CoA to tetrahydrodipicolinate. The polypeptide is 2,3,4,5-tetrahydropyridine-2,6-dicarboxylate N-acetyltransferase (Bacillus subtilis (strain 168)).